A 149-amino-acid polypeptide reads, in one-letter code: Large ribosomal subunit protein uL24 (149 aa).

Residues 114–149 (RKIIERSGGTPEVEAVPEKSEEEKEEKEKEEEKSEE) are disordered. Residues 129–149 (VPEKSEEEKEEKEKEEEKSEE) show a composition bias toward basic and acidic residues.

Belongs to the universal ribosomal protein uL24 family. As to quaternary structure, part of the 50S ribosomal subunit.

Its function is as follows. One of two assembly initiator proteins, it binds directly to the 5'-end of the 23S rRNA, where it nucleates assembly of the 50S subunit. Functionally, located at the polypeptide exit tunnel on the outside of the subunit. The polypeptide is Large ribosomal subunit protein uL24 (Methanopyrus kandleri (strain AV19 / DSM 6324 / JCM 9639 / NBRC 100938)).